The chain runs to 198 residues: Holliday junction branch migration complex subunit RuvA (198 aa).

The segment at methionine 1–glutamate 61 is domain I. Positions glycine 62–isoleucine 140 are domain II. The segment at alanine 141–serine 145 is flexible linker. A domain III region spans residues aspartate 146 to alanine 198.

This sequence belongs to the RuvA family. In terms of assembly, homotetramer. Forms an RuvA(8)-RuvB(12)-Holliday junction (HJ) complex. HJ DNA is sandwiched between 2 RuvA tetramers; dsDNA enters through RuvA and exits via RuvB. An RuvB hexamer assembles on each DNA strand where it exits the tetramer. Each RuvB hexamer is contacted by two RuvA subunits (via domain III) on 2 adjacent RuvB subunits; this complex drives branch migration. In the full resolvosome a probable DNA-RuvA(4)-RuvB(12)-RuvC(2) complex forms which resolves the HJ.

It is found in the cytoplasm. Functionally, the RuvA-RuvB-RuvC complex processes Holliday junction (HJ) DNA during genetic recombination and DNA repair, while the RuvA-RuvB complex plays an important role in the rescue of blocked DNA replication forks via replication fork reversal (RFR). RuvA specifically binds to HJ cruciform DNA, conferring on it an open structure. The RuvB hexamer acts as an ATP-dependent pump, pulling dsDNA into and through the RuvAB complex. HJ branch migration allows RuvC to scan DNA until it finds its consensus sequence, where it cleaves and resolves the cruciform DNA. The protein is Holliday junction branch migration complex subunit RuvA of Lacticaseibacillus casei (strain BL23) (Lactobacillus casei).